Reading from the N-terminus, the 434-residue chain is D-amino acid dehydrogenase (434 aa).

Residue 3 to 17 (VIVLGSGVIGTTTAY) coordinates FAD.

The protein belongs to the DadA oxidoreductase family. FAD is required as a cofactor.

The catalysed reaction is a D-alpha-amino acid + A + H2O = a 2-oxocarboxylate + AH2 + NH4(+). Its function is as follows. Oxidative deamination of D-amino acids. The protein is D-amino acid dehydrogenase of Bordetella parapertussis (strain 12822 / ATCC BAA-587 / NCTC 13253).